A 92-amino-acid chain; its full sequence is MKLALALCAAFLLVVLVQAEQECTPGQTKKQDCNTCNCTPTGVWACTRKGCPPHKREVTCEPGTTFKDKCNTCRCGSDGKSAACTLKACPQK.

An N-terminal signal peptide occupies residues 1–19 (MKLALALCAAFLLVVLVQA). Pacifastin domains follow at residues 20–54 (EQECTPGQTKKQDCNTCNCTPTGVWACTRKGCPPH) and 57–92 (EVTCEPGTTFKDKCNTCRCGSDGKSAACTLKACPQK). Cystine bridges form between cysteine 23-cysteine 38, cysteine 33-cysteine 51, cysteine 36-cysteine 46, cysteine 60-cysteine 75, cysteine 70-cysteine 89, and cysteine 73-cysteine 84.

Belongs to the protease inhibitor I19 family. In terms of tissue distribution, expressed in hemolymph, ovaries, testes and fat body of adults but are absent in the gut. Also present in larval hemolymph and fat body.

The protein resides in the secreted. Its function is as follows. In vitro, is active against alpha-chymotrypsin and trypsin. In terms of biological role, in vitro, is active against alpha-chymotrypsin and pancreatic elastase. In Schistocerca gregaria (Desert locust), this protein is Serine protease inhibitor I/II.